The following is a 557-amino-acid chain: Protein Red (557 aa).

Residues 1-84 (MPERDSEPFS…RKKKSYYAKL (84 aa)) are disordered. The span at 16-25 (DGHDVDDPHS) shows a compositional bias: basic and acidic residues. The segment covering 42 to 53 (TPRAAPTSAPPS) has biased composition (low complexity). N6-acetyllysine is present on residues Lys98 and Lys137. Residue Lys151 forms a Glycyl lysine isopeptide (Lys-Gly) (interchain with G-Cter in SUMO2) linkage. Residues 181–205 (KEKEEEELMEKPQKETKKDEDPENK) are disordered. Ser287 bears the Phosphoserine mark. Basic residues predominate over residues 294 to 303 (RNKKLKKKDK). Residues 294–402 (RNKKLKKKDK…PIDVDKGPGS (109 aa)) form a disordered region. The span at 304-313 (GKLEEKKPPE) shows a compositional bias: basic and acidic residues. Glycyl lysine isopeptide (Lys-Gly) (interchain with G-Cter in SUMO2) cross-links involve residues Lys310 and Lys331. Positions 332–398 (TPRDKERERY…VDDEPIDVDK (67 aa)) are enriched in basic and acidic residues. 17 consecutive repeat copies span residues 342–343 (RE), 344–345 (RE), 346–347 (RD), 348–349 (RE), 350–351 (RD), 352–353 (RD), 354–355 (RD), 356–357 (RE), 358–359 (RE), 360–361 (RE), 362–363 (RD), 364–365 (RE), 366–367 (RE), 368–369 (RE), 370–371 (RD), 372–373 (RE), and 374–375 (RE). Residues 342 to 375 (RERERDRERDRDRDRERERERDRERERERDRERE) are 17 X 2 AA tandem repeats of R-[ED]. Residues Lys386, Lys388, Lys404, and Lys408 each participate in a glycyl lysine isopeptide (Lys-Gly) (interchain with G-Cter in SUMO2) cross-link. 2 positions are modified to phosphoserine: Ser417 and Ser460. A Phosphothreonine modification is found at Thr485. Glycyl lysine isopeptide (Lys-Gly) (interchain with G-Cter in SUMO2) cross-links involve residues Lys496, Lys501, and Lys509. Ser536 carries the phosphoserine modification. Glycyl lysine isopeptide (Lys-Gly) (interchain with G-Cter in SUMO2) cross-links involve residues Lys541, Lys543, Lys544, and Lys553.

The protein belongs to the RED family. As to quaternary structure, component of the spliceosome B complex. Interacts with SMU1. Interacts with MAD1L1. May interact with DHX15.

The protein resides in the nucleus. It localises to the nucleoplasm. Its subcellular location is the chromosome. It is found in the cytoplasm. The protein localises to the cytoskeleton. The protein resides in the spindle pole. Its function is as follows. Involved in pre-mRNA splicing as a component of the spliceosome. Auxiliary spliceosomal protein that regulates selection of alternative splice sites in a small set of target pre-mRNA species. Required for normal mitotic cell cycle progression. Recruits MAD1L1 and MAD2L1 to kinetochores, and is required to trigger the spindle assembly checkpoint. Required for normal accumulation of SMU1. This is Protein Red (IK) from Pongo abelii (Sumatran orangutan).